The sequence spans 227 residues: Lipoprotein-releasing system ATP-binding protein LolD (227 aa).

Residues 6-227 form the ABC transporter domain; the sequence is LVLDDIQKSY…RLDEGVLVSA (222 aa). 43-50 contacts ATP; the sequence is APSGAGKS.

This sequence belongs to the ABC transporter superfamily. Lipoprotein translocase (TC 3.A.1.125) family. In terms of assembly, the complex is composed of two ATP-binding proteins (LolD) and two transmembrane proteins (LolC and LolE).

Its subcellular location is the cell inner membrane. In terms of biological role, part of the ABC transporter complex LolCDE involved in the translocation of mature outer membrane-directed lipoproteins, from the inner membrane to the periplasmic chaperone, LolA. Responsible for the formation of the LolA-lipoprotein complex in an ATP-dependent manner. The polypeptide is Lipoprotein-releasing system ATP-binding protein LolD (Jannaschia sp. (strain CCS1)).